Consider the following 1915-residue polypeptide: Protein TIC 214 (1915 aa).

Transmembrane regions (helical) follow at residues 18-38, 64-84, 90-110, 126-146, 174-194, and 230-250; these read IINSVVVVGLYYGFLTTFSIG, FITGQLMMFISIYYAPLHLAL, ITVLVLPYLLFHFFWHNHKYF, LNIQCVFLNNLIFPLFNHFIL, VGWLIGHILFMKWVELVLIWI, and IFSILLFITCIYYLGRMPSTL. 2 disordered regions span residues 260–319 and 1566–1631; these read KMKQ…EIRV and NKNI…GSVL. Residues 267 to 277 show a composition bias toward acidic residues; that stretch reads SEEETDVEIET. The span at 279 to 288 shows a compositional bias: basic and acidic residues; it reads SETKETKEEQ. A compositionally biased stretch (acidic residues) spans 304 to 315; the sequence is EKEDPDKIDETE. Positions 1587-1601 are enriched in basic and acidic residues; it reads KSLELENRNQEEKES. Residues 1602-1631 show a composition bias toward polar residues; it reads SSQGDLGSNAQNQGNLGPNAQNQGNLGSVL.

Belongs to the TIC214 family. As to quaternary structure, part of the Tic complex.

The protein resides in the plastid. Its subcellular location is the chloroplast inner membrane. Involved in protein precursor import into chloroplasts. May be part of an intermediate translocation complex acting as a protein-conducting channel at the inner envelope. This is Protein TIC 214 from Platanus occidentalis (Sycamore).